Here is a 321-residue protein sequence, read N- to C-terminus: uncharacterized protein (321 aa).

28-35 (GPINSGKT) is a binding site for ATP.

It belongs to the archaeal ATPase family.

This is an uncharacterized protein from Pyrococcus horikoshii (strain ATCC 700860 / DSM 12428 / JCM 9974 / NBRC 100139 / OT-3).